Consider the following 249-residue polypeptide: Ubiquinone biosynthesis O-methyltransferase (249 aa).

Residues 1–21 form a disordered region; the sequence is MIPEVSNEASQPAAHRQENVD. S-adenosyl-L-methionine is bound by residues R52, G72, D93, and M137.

It belongs to the methyltransferase superfamily. UbiG/COQ3 family.

It carries out the reaction a 3-demethylubiquinol + S-adenosyl-L-methionine = a ubiquinol + S-adenosyl-L-homocysteine + H(+). It catalyses the reaction a 3-(all-trans-polyprenyl)benzene-1,2-diol + S-adenosyl-L-methionine = a 2-methoxy-6-(all-trans-polyprenyl)phenol + S-adenosyl-L-homocysteine + H(+). The protein operates within cofactor biosynthesis; ubiquinone biosynthesis. Functionally, O-methyltransferase that catalyzes the 2 O-methylation steps in the ubiquinone biosynthetic pathway. This Sodalis glossinidius (strain morsitans) protein is Ubiquinone biosynthesis O-methyltransferase.